Reading from the N-terminus, the 49-residue chain is Large ribosomal subunit protein bL33B (49 aa).

It belongs to the bacterial ribosomal protein bL33 family.

The chain is Large ribosomal subunit protein bL33B from Bacillus pumilus (strain SAFR-032).